Consider the following 396-residue polypeptide: Unsaturated chondroitin disaccharide hydrolase (396 aa).

The active-site Nucleophile is the aspartate 113. 8 residues coordinate substrate: aspartate 113, aspartate 173, glycine 231, threonine 233, arginine 245, tryptophan 249, serine 363, and serine 366. Aspartate 173 serves as the catalytic Proton donor.

It belongs to the glycosyl hydrolase 88 family. As to quaternary structure, monomer.

It carries out the reaction beta-D-4-deoxy-Delta(4)-GlcpA-(1-&gt;3)-beta-D-GalpNAc6S + H2O = N-acetyl-beta-D-galactosamine 6-sulfate + 5-dehydro-4-deoxy-D-glucuronate. Its function is as follows. Catalyzes the hydrolysis of unsaturated hyaluronate and chondroitin disaccharides. Also degrades unsaturated heparin disaccharides. Releases 4-deoxy-4,5-didehydro D-glucuronic acid or 4-deoxy-4,5-didehydro L-iduronic acid from chondroitin disaccharides, hyaluronan disaccharides and heparin disaccharides and cleaves both glycosidic (1-&gt;3) and (1-&gt;4) bonds. Prefers sulfated glycosaminoglycans compared to unsulfated glycosaminoglycans. Probably required for mammalian cells invasion through the degradation of extracellular sulfated glycosaminoglycans such as chondroitin and hyaluronan. The protein is Unsaturated chondroitin disaccharide hydrolase (ugl) of Streptococcus pneumoniae (strain ATCC BAA-255 / R6).